The sequence spans 306 residues: N-acetylmuramic acid 6-phosphate etherase (306 aa).

One can recognise an SIS domain in the interval 55–218; the sequence is IVPRMKKGGR…STGVMIKLGK (164 aa). The active-site Proton donor is the E83. Residue E114 is part of the active site.

This sequence belongs to the GCKR-like family. MurNAc-6-P etherase subfamily. Homodimer.

It catalyses the reaction N-acetyl-D-muramate 6-phosphate + H2O = N-acetyl-D-glucosamine 6-phosphate + (R)-lactate. The protein operates within amino-sugar metabolism; N-acetylmuramate degradation. Its function is as follows. Specifically catalyzes the cleavage of the D-lactyl ether substituent of MurNAc 6-phosphate, producing GlcNAc 6-phosphate and D-lactate. The sequence is that of N-acetylmuramic acid 6-phosphate etherase from Caldanaerobacter subterraneus subsp. tengcongensis (strain DSM 15242 / JCM 11007 / NBRC 100824 / MB4) (Thermoanaerobacter tengcongensis).